The following is a 385-amino-acid chain: Interleukin-13 receptor subunit alpha-2 (385 aa).

Residues 1 to 23 (MALMAVNTRCLCLFLLCTITGHS) form the signal peptide. At 24 to 336 (LEIKVNPPQD…WEGYTGPDSK (313 aa)) the chain is on the extracellular side. 3 Fibronectin type-III domains span residues 30–130 (PPQD…ADEG), 133–221 (GTKI…PIRS), and 236–334 (PPEF…TGPD). A disulfide bond links C61 and C109. N-linked (GlcNAc...) asparagine glycosylation is present at N111. The cysteines at positions 141 and 151 are disulfide-linked. N164 is a glycosylation site (N-linked (GlcNAc...) asparagine). A disulfide bridge links C180 with C193. N-linked (GlcNAc...) asparagine glycans are attached at residues N211 and N295. A disulfide bond links C265 and C312. The WSXWS motif signature appears at 318–322 (WSEWS). The helical transmembrane segment at 337 to 357 (IVFIVPVCLFFIFLLLLLCLI) threads the bilayer. Over 358–385 (VEKEDPEPTLSLHVDLNKEMYAYEETLC) the chain is Cytoplasmic.

It belongs to the type I cytokine receptor family. Type 5 subfamily. As to quaternary structure, interacts with IL4RA. Interacts with high affinity to interleukin-13 (IL13), but not to interleukin-4 (IL4). In terms of processing, cleaved by MMP8 leading to a soluble form that is also able to interact with IL13.

It is found in the cell membrane. In terms of biological role, cell surface receptor that plays a role in the regulation of IL-13-mediated responses. Functions as a decoy receptor that inhibits IL-13- and IL-4-mediated signal transduction via the JAK-STAT pathway and thereby modulates immune responses and inflammation. Serves as a functional signaling receptor for IL-13 in an alternative pathway involving AP-1 ultimately leading to the production of TGFB1. In Rattus norvegicus (Rat), this protein is Interleukin-13 receptor subunit alpha-2 (Il13ra2).